Here is a 94-residue protein sequence, read N- to C-terminus: Large ribosomal subunit protein bL27 (94 aa).

A propeptide spanning residues 1 to 9 (MLRLDLQFF) is cleaved from the precursor.

Belongs to the bacterial ribosomal protein bL27 family. In terms of processing, the N-terminus is cleaved by ribosomal processing cysteine protease Prp.

This is Large ribosomal subunit protein bL27 from Bacillus velezensis (strain DSM 23117 / BGSC 10A6 / LMG 26770 / FZB42) (Bacillus amyloliquefaciens subsp. plantarum).